The chain runs to 211 residues: tRNA (guanine-N(7)-)-methyltransferase (211 aa).

S-adenosyl-L-methionine contacts are provided by E43, E68, D95, and D117. The active site involves D117. Substrate is bound by residues K121, D153, and 190–193; that span reads TEYE.

It belongs to the class I-like SAM-binding methyltransferase superfamily. TrmB family.

The enzyme catalyses guanosine(46) in tRNA + S-adenosyl-L-methionine = N(7)-methylguanosine(46) in tRNA + S-adenosyl-L-homocysteine. It participates in tRNA modification; N(7)-methylguanine-tRNA biosynthesis. In terms of biological role, catalyzes the formation of N(7)-methylguanine at position 46 (m7G46) in tRNA. In Staphylococcus saprophyticus subsp. saprophyticus (strain ATCC 15305 / DSM 20229 / NCIMB 8711 / NCTC 7292 / S-41), this protein is tRNA (guanine-N(7)-)-methyltransferase.